The primary structure comprises 256 residues: Short-chain dehydrogenase/reductase cdmF (256 aa).

Residues valine 11, aspartate 57, and arginine 119 each coordinate NADP(+). The active-site Proton donor is serine 137. NADP(+) contacts are provided by tyrosine 151, lysine 155, glycine 183, and asparagine 187. Residue tyrosine 151 is the Proton acceptor of the active site. The Lowers pKa of active site Tyr role is filled by lysine 155.

It belongs to the short-chain dehydrogenases/reductases (SDR) family.

The enzyme catalyses 3-hydroxypentacecilide A + A = chrodrimanin C + AH2. The catalysed reaction is chrodrimanin F + A = chrodrimanin H + AH2. It functions in the pathway secondary metabolite biosynthesis; terpenoid biosynthesis. In terms of biological role, short-chain dehydrogenase/reductase; part of the gene cluster that mediates the biosynthesis of chrodrimanin B, a meroterpenoid that acts as a potent blocker of insect GABA-gated chloride channels. The first step of the pathway is the biosynthesis of 6-hydroxymellein by the polyketide synthase cdmE. The prenyltransferase cdmH acts as a 6-hydroxymellein 5-farnesyltransferase and produces the hydrophobic metabolite verruculide C. The FAD-dependent monooxygenase cdmI further converts verruculide C into verruculide B. The terpene cyclase cdmG then produced the pentacyclic molecule 3-hydroxypentacecilide A, the backbone structure of chrodrimanin B, via folding the farnesyl moiety of the substrate into the chair-boat conformation. The short-chain dehydrogenase/reductase cdmF functions as the 3-OH dehydrogenase that oxidizes the C-3 hydroxyl group of 3-hydroxypentacecilide A and produces chrodrimanin C, the dehydrogenated product of 3-hydroxypentacecilide A. The cytochrome P450 monooxygenase cdmJ then accepts both 3-hydroxypentacecilide A and chrodrimanin C and functions as a C-7-beta-hydroxylase to produce respectively chrodrimanin H and chrodrimanin F. The dioxygenase cdmA accepts chrodrimanin H to afford chrodrimanin E, which is further transformed to chrodrimanin A by the dioxygenase cdmD. CdmA can also accept chrodrimanin C as substrate to convert it into verruculide A, which is further converted into chrodrimanin T by cdmD. The last step of the biosynthesis is proposed to be performed by the acetyltransferase cdmC which acetylates chrodrimanin A to yield chrodrimanin B. The pathway may also lead to the production of additional shunt products, including chrodrimanins T and U. This chain is Short-chain dehydrogenase/reductase cdmF, found in Talaromyces verruculosus (Penicillium verruculosum).